We begin with the raw amino-acid sequence, 574 residues long: Membrane protein insertase YidC (574 aa).

Transmembrane regions (helical) follow at residues valine 6–aspartate 26, phenylalanine 356–phenylalanine 376, tryptophan 380–alanine 400, glycine 447–valine 467, proline 489–proline 509, and proline 525–valine 545.

Belongs to the OXA1/ALB3/YidC family. Type 1 subfamily. In terms of assembly, interacts with the Sec translocase complex via SecD. Specifically interacts with transmembrane segments of nascent integral membrane proteins during membrane integration.

It is found in the cell inner membrane. In terms of biological role, required for the insertion and/or proper folding and/or complex formation of integral membrane proteins into the membrane. Involved in integration of membrane proteins that insert both dependently and independently of the Sec translocase complex, as well as at least some lipoproteins. Aids folding of multispanning membrane proteins. This Xanthomonas axonopodis pv. citri (strain 306) protein is Membrane protein insertase YidC.